The chain runs to 396 residues: Elongation factor Tu (396 aa).

Residues 10–206 form the tr-type G domain; it reads KPHVNIGTIG…AVDESVPDPV (197 aa). The G1 stretch occupies residues 19–26; it reads GHVDHGKT. 19–26 contacts GTP; sequence GHVDHGKT. Residue Thr-26 coordinates Mg(2+). The interval 62 to 66 is G2; sequence GITIN. A G3 region spans residues 83–86; that stretch reads DAPG. GTP is bound by residues 83 to 87 and 138 to 141; these read DAPGH and NKSD. The tract at residues 138 to 141 is G4; it reads NKSD. Residues 176–178 form a G5 region; that stretch reads SGL.

Belongs to the TRAFAC class translation factor GTPase superfamily. Classic translation factor GTPase family. EF-Tu/EF-1A subfamily. In terms of assembly, monomer.

Its subcellular location is the cytoplasm. The catalysed reaction is GTP + H2O = GDP + phosphate + H(+). GTP hydrolase that promotes the GTP-dependent binding of aminoacyl-tRNA to the A-site of ribosomes during protein biosynthesis. The polypeptide is Elongation factor Tu (Pseudarthrobacter chlorophenolicus (strain ATCC 700700 / DSM 12829 / CIP 107037 / JCM 12360 / KCTC 9906 / NCIMB 13794 / A6) (Arthrobacter chlorophenolicus)).